Here is a 546-residue protein sequence, read N- to C-terminus: Chaperonin GroEL (546 aa).

ATP contacts are provided by residues 30–33 (TLGP), Lys-51, 87–91 (DGTTT), Gly-415, 479–481 (NAA), and Asp-495. Positions 526 to 546 (KEEKPDLSGAGAGMGGMGGMM) are disordered. Gly residues predominate over residues 535–546 (AGAGMGGMGGMM).

The protein belongs to the chaperonin (HSP60) family. As to quaternary structure, forms a cylinder of 14 subunits composed of two heptameric rings stacked back-to-back. Interacts with the co-chaperonin GroES.

The protein resides in the cytoplasm. The enzyme catalyses ATP + H2O + a folded polypeptide = ADP + phosphate + an unfolded polypeptide.. Its function is as follows. Together with its co-chaperonin GroES, plays an essential role in assisting protein folding. The GroEL-GroES system forms a nano-cage that allows encapsulation of the non-native substrate proteins and provides a physical environment optimized to promote and accelerate protein folding. The chain is Chaperonin GroEL from Wigglesworthia glossinidia brevipalpis.